A 540-amino-acid chain; its full sequence is Zinc metalloproteinase nas-10 (540 aa).

The region spanning 293–500 is the Peptidase M12A domain; that stretch reads ASIFFEQNLI…VEILNKMYCK (208 aa). Cystine bridges form between cysteine 339/cysteine 499, cysteine 365/cysteine 385, cysteine 504/cysteine 540, cysteine 511/cysteine 533, and cysteine 520/cysteine 537. Histidine 394 lines the Zn(2+) pocket. Glutamate 395 is an active-site residue. Zn(2+) is bound by residues histidine 398 and histidine 404. The region spanning 504-540 is the ShKT domain; the sequence is CDDKNVYCGAWALQDLCNNPNHNVWMRSNCRKSCNFC.

Zn(2+) serves as cofactor.

Metalloprotease. The sequence is that of Zinc metalloproteinase nas-10 from Caenorhabditis elegans.